A 195-amino-acid polypeptide reads, in one-letter code: Protein GrpE (195 aa).

A disordered region spans residues 1 to 60 (MAKDEEKNSQASAAPNEGEVKAKQEQTSAKEPAAKAGETEKVADLQKQVEELTKQLDDQK). Basic and acidic residues predominate over residues 37–60 (GETEKVADLQKQVEELTKQLDDQK).

Belongs to the GrpE family. Homodimer.

The protein resides in the cytoplasm. Functionally, participates actively in the response to hyperosmotic and heat shock by preventing the aggregation of stress-denatured proteins, in association with DnaK and GrpE. It is the nucleotide exchange factor for DnaK and may function as a thermosensor. Unfolded proteins bind initially to DnaJ; upon interaction with the DnaJ-bound protein, DnaK hydrolyzes its bound ATP, resulting in the formation of a stable complex. GrpE releases ADP from DnaK; ATP binding to DnaK triggers the release of the substrate protein, thus completing the reaction cycle. Several rounds of ATP-dependent interactions between DnaJ, DnaK and GrpE are required for fully efficient folding. This is Protein GrpE from Limosilactobacillus fermentum (strain NBRC 3956 / LMG 18251) (Lactobacillus fermentum).